A 582-amino-acid polypeptide reads, in one-letter code: Inactive metallocarboxypeptidase ECM14 (582 aa).

The first 20 residues, 1-20, serve as a signal peptide directing secretion; that stretch reads MHILQVITGATLVSVPFVSA. Positions 21–172 are excised as a propeptide; that stretch reads IPSSTSEFLP…QAVYESYPQP (152 aa). Positions 200–522 constitute a Peptidase M14 domain; sequence DYQPLSVIIP…NAVLVFGQFL (323 aa). Positions 265 and 268 each coordinate Zn(2+). Residues 265–268, Arg-323, and 340–341 each bind substrate; these read HARE and DR. Cys-334 and Cys-357 are joined by a disulfide. Asn-381 and Asn-387 each carry an N-linked (GlcNAc...) asparagine glycan. His-397 is a binding site for Zn(2+). 398–399 contributes to the substrate binding site; that stretch reads SY. The span at 561–571 shows a compositional bias: acidic residues; the sequence is SNQLEDDDNEN. Residues 561–582 form a disordered region; the sequence is SNQLEDDDNENDTLLGFRTQKV. A glycan (N-linked (GlcNAc...) asparagine) is linked at Asn-571.

Belongs to the peptidase M14 family. The cofactor is Zn(2+).

It localises to the vacuole. It is found in the secreted. Functionally, inactive carboxypeptidase that may play a role in cell wall organization and biogenesis. The protein is Inactive metallocarboxypeptidase ECM14 (ECM14) of Coccidioides posadasii (strain C735) (Valley fever fungus).